The primary structure comprises 283 residues: Methylamine utilization ferredoxin-type protein MauN (283 aa).

4Fe-4S ferredoxin-type domains lie at 217-248 (VRVS…PALK) and 251-280 (GSPL…MASR). [4Fe-4S] cluster contacts are provided by Cys227, Cys230, Cys233, Cys237, Cys260, Cys263, Cys266, and Cys270.

Its pathway is one-carbon metabolism; methylamine degradation. Functionally, involved in electron transfer. This chain is Methylamine utilization ferredoxin-type protein MauN (mauN), found in Paracoccus denitrificans (strain Pd 1222).